The chain runs to 86 residues: UPF0457 protein SSP0714 (86 aa).

It belongs to the UPF0457 family.

This is UPF0457 protein SSP0714 from Staphylococcus saprophyticus subsp. saprophyticus (strain ATCC 15305 / DSM 20229 / NCIMB 8711 / NCTC 7292 / S-41).